Consider the following 648-residue polypeptide: Probable potassium transport system protein Kup 1 (648 aa).

Helical transmembrane passes span 25–45 (LTLG…IYAF), 57–77 (IVAG…ILVV), 113–133 (LVMA…VITP), 153–173 (SVSR…LFLM), 184–204 (LFGP…LIHI), 219–239 (GVLF…AVFL), 263–283 (WLAI…AFAL), 312–332 (IPLV…VITG), 362–382 (IYLP…VLGF), 391–411 (AYGV…FLVV), 417–437 (WGWP…LFFF), and 446–466 (EGGW…VTWV).

Belongs to the HAK/KUP transporter (TC 2.A.72) family.

It localises to the cell inner membrane. It carries out the reaction K(+)(in) + H(+)(in) = K(+)(out) + H(+)(out). In terms of biological role, transport of potassium into the cell. Likely operates as a K(+):H(+) symporter. This Rhizorhabdus wittichii (strain DSM 6014 / CCUG 31198 / JCM 15750 / NBRC 105917 / EY 4224 / RW1) (Sphingomonas wittichii) protein is Probable potassium transport system protein Kup 1.